A 676-amino-acid polypeptide reads, in one-letter code: DNA ligase (676 aa).

Residues 34–38 (DAEYD), 84–85 (SL), and Glu116 each bind NAD(+). Lys118 serves as the catalytic N6-AMP-lysine intermediate. 4 residues coordinate NAD(+): Arg139, Glu174, Lys294, and Lys318. 4 residues coordinate Zn(2+): Cys412, Cys415, Cys428, and Cys433. The 88-residue stretch at 589–676 (KGGEALKGLT…RTGKKAEELV (88 aa)) folds into the BRCT domain.

The protein belongs to the NAD-dependent DNA ligase family. LigA subfamily. Requires Mg(2+) as cofactor. The cofactor is Mn(2+).

It carries out the reaction NAD(+) + (deoxyribonucleotide)n-3'-hydroxyl + 5'-phospho-(deoxyribonucleotide)m = (deoxyribonucleotide)n+m + AMP + beta-nicotinamide D-nucleotide.. Its function is as follows. DNA ligase that catalyzes the formation of phosphodiester linkages between 5'-phosphoryl and 3'-hydroxyl groups in double-stranded DNA using NAD as a coenzyme and as the energy source for the reaction. It is essential for DNA replication and repair of damaged DNA. This is DNA ligase from Thermus thermophilus (strain ATCC 27634 / DSM 579 / HB8).